The following is a 118-amino-acid chain: Large ribosomal subunit protein bL20 (118 aa).

Belongs to the bacterial ribosomal protein bL20 family.

Functionally, binds directly to 23S ribosomal RNA and is necessary for the in vitro assembly process of the 50S ribosomal subunit. It is not involved in the protein synthesizing functions of that subunit. This is Large ribosomal subunit protein bL20 from Methylibium petroleiphilum (strain ATCC BAA-1232 / LMG 22953 / PM1).